Reading from the N-terminus, the 493-residue chain is 2-amino-4-deoxychorismate synthase (493 aa).

Belongs to the anthranilate synthase component I family. Mg(2+) serves as cofactor.

The enzyme catalyses (2S)-2-amino-4-deoxychorismate + L-glutamate = chorismate + L-glutamine. Converts chorismate to 2-amino-4-deoxychorismate (ADIC). Involved in the biosynthesis of the benzoxazolinate moiety of the enediyne antitumor antibiotic C-1027. This is 2-amino-4-deoxychorismate synthase (sgcD) from Streptomyces globisporus.